We begin with the raw amino-acid sequence, 156 residues long: Ribosomal RNA large subunit methyltransferase H (156 aa).

S-adenosyl-L-methionine is bound by residues Leu73, Gly104, and 123–128 (LSKLTL).

This sequence belongs to the RNA methyltransferase RlmH family. In terms of assembly, homodimer.

The protein localises to the cytoplasm. The enzyme catalyses pseudouridine(1915) in 23S rRNA + S-adenosyl-L-methionine = N(3)-methylpseudouridine(1915) in 23S rRNA + S-adenosyl-L-homocysteine + H(+). Its function is as follows. Specifically methylates the pseudouridine at position 1915 (m3Psi1915) in 23S rRNA. This is Ribosomal RNA large subunit methyltransferase H from Hydrogenovibrio crunogenus (strain DSM 25203 / XCL-2) (Thiomicrospira crunogena).